Consider the following 106-residue polypeptide: Large ribosomal subunit protein uL24 (106 aa).

It belongs to the universal ribosomal protein uL24 family. In terms of assembly, part of the 50S ribosomal subunit.

Functionally, one of two assembly initiator proteins, it binds directly to the 5'-end of the 23S rRNA, where it nucleates assembly of the 50S subunit. In terms of biological role, one of the proteins that surrounds the polypeptide exit tunnel on the outside of the subunit. This chain is Large ribosomal subunit protein uL24, found in Rhodospirillum rubrum (strain ATCC 11170 / ATH 1.1.1 / DSM 467 / LMG 4362 / NCIMB 8255 / S1).